The sequence spans 713 residues: Transcription activator of gluconeogenesis CPC735_053490 (713 aa).

Residues M1–R70 form a disordered region. Residues G19–P56 show a composition bias toward polar residues. Residues C77–C105 constitute a DNA-binding region (zn(2)-C6 fungal-type). Over residues P145–P159 the composition is skewed to polar residues. Disordered stretches follow at residues P145–Q229, G274–D318, G541–I564, and G623–W665. Over residues Q160–N171 the composition is skewed to low complexity. Residues F191–N212 are compositionally biased toward polar residues. Residues Q213 to Q229 are compositionally biased toward low complexity. 3 stretches are compositionally biased toward polar residues: residues S295–P312, G541–P558, and G649–L659.

The protein belongs to the ERT1/acuK family.

Its subcellular location is the nucleus. Functionally, transcription factor which regulates nonfermentable carbon utilization. Activator of gluconeogenetic genes. The chain is Transcription activator of gluconeogenesis CPC735_053490 from Coccidioides posadasii (strain C735) (Valley fever fungus).